Reading from the N-terminus, the 731-residue chain is 1,4-alpha-glucan branching enzyme GlgB (731 aa).

The active-site Nucleophile is D408. E461 functions as the Proton donor in the catalytic mechanism.

Belongs to the glycosyl hydrolase 13 family. GlgB subfamily. As to quaternary structure, monomer.

It catalyses the reaction Transfers a segment of a (1-&gt;4)-alpha-D-glucan chain to a primary hydroxy group in a similar glucan chain.. It participates in glycan biosynthesis; glycogen biosynthesis. Functionally, catalyzes the formation of the alpha-1,6-glucosidic linkages in glycogen by scission of a 1,4-alpha-linked oligosaccharide from growing alpha-1,4-glucan chains and the subsequent attachment of the oligosaccharide to the alpha-1,6 position. The protein is 1,4-alpha-glucan branching enzyme GlgB of Corynebacterium efficiens (strain DSM 44549 / YS-314 / AJ 12310 / JCM 11189 / NBRC 100395).